We begin with the raw amino-acid sequence, 134 residues long: Ribonuclease VapC1 (134 aa).

The 120-residue stretch at 4–123 (IIDTSIIIAL…LNVKDFKRIQ (120 aa)) folds into the PINc domain. Residues Asp6 and Asp97 each coordinate Mg(2+).

It belongs to the PINc/VapC protein family. Mg(2+) is required as a cofactor.

Its function is as follows. Toxic component of a type II toxin-antitoxin (TA) system. Has ssRNase activity. Upon expression in E.coli inhibits growth in liquid culture; this toxic effect is neutralized by coexpression with cognate antitoxin VapB1. Its RNase activity is partially inhibited in vitro by VapB1. This is Ribonuclease VapC1 from Rickettsia felis (strain ATCC VR-1525 / URRWXCal2) (Rickettsia azadi).